A 266-amino-acid polypeptide reads, in one-letter code: Nitrate import ATP-binding protein NrtD (266 aa).

Residues 3 to 234 (LEITDLNRVF…DEETPKNRTY (232 aa)) enclose the ABC transporter domain. Position 39–46 (39–46 (GASGSGKS)) interacts with ATP.

This sequence belongs to the ABC transporter superfamily. Nitrate/nitrite/cyanate uptake transporter (NitT) (TC 3.A.1.16) family. In terms of assembly, the complex is composed of two ATP-binding proteins (NrtC and NrtD), two transmembrane proteins (NrtB) and a solute-binding protein (NrtA).

It is found in the cell inner membrane. The catalysed reaction is nitrate(out) + ATP + H2O = nitrate(in) + ADP + phosphate + H(+). Functionally, part of the ABC transporter complex NrtABCD involved in nitrate uptake. The complex is probably also involved in nitrite transport. Probably responsible for energy coupling to the transport system. This is Nitrate import ATP-binding protein NrtD (nrtD) from Synechocystis sp. (strain ATCC 27184 / PCC 6803 / Kazusa).